The chain runs to 141 residues: Putative pre-16S rRNA nuclease (141 aa).

Belongs to the YqgF nuclease family.

The protein resides in the cytoplasm. In terms of biological role, could be a nuclease involved in processing of the 5'-end of pre-16S rRNA. The polypeptide is Putative pre-16S rRNA nuclease (Roseiflexus sp. (strain RS-1)).